We begin with the raw amino-acid sequence, 375 residues long: Serpin B5 (375 aa).

5 N-linked (GlcNAc...) asparagine glycosylation sites follow: asparagine 99, asparagine 133, asparagine 188, asparagine 298, and asparagine 361.

The protein belongs to the serpin family. Ov-serpin subfamily. As to quaternary structure, interacts with IRF6.

The protein resides in the secreted. The protein localises to the extracellular space. Functionally, tumor suppressor. It blocks the growth, invasion, and metastatic properties of mammary tumors. As it does not undergo the S (stressed) to R (relaxed) conformational transition characteristic of active serpins, it exhibits no serine protease inhibitory activity. The protein is Serpin B5 (Serpinb5) of Rattus norvegicus (Rat).